The following is a 2065-amino-acid chain: Cytoskeleton-associated protein 5-A (2065 aa).

2 TOG regions span residues Met1–Ala240 and Val264–Lys515. HEAT repeat units lie at residues Glu120–Ser157, Met160–Asp197, Leu270–Ile311, Gly314–Lys352, Ser356–Leu393, Asn395–Pro432, and Leu436–Phe477. Residues Asn500 to Val574 are disordered. Residues Lys538–Ala568 are compositionally biased toward low complexity. Residues Lys644–Lys808 are TOG 3. HEAT repeat units follow at residues Phe652 to Asp689 and Ile748 to Ala785. The interval Met809–Pro849 is disordered. The span at Glu829 to Pro841 shows a compositional bias: acidic residues. A TOG 4 region spans residues Asp846–Lys1090. HEAT repeat units follow at residues Asp852 to Phe889, Pro892 to His929, Gln933 to Met970, and Cys1015 to Lys1052. The span at Ala1074–Ser1115 shows a compositional bias: low complexity. Positions Ala1074–Pro1192 are disordered. A compositionally biased stretch (polar residues) spans Pro1126–Ser1163. The interaction with microtubule lattice stretch occupies residues Asn1150–Pro1235. The interval Gly1191–Gln1460 is TOG 5. HEAT repeat units follow at residues Gln1251 to Asp1288, Met1295 to Met1318, Glu1319 to Ala1355, Lys1357 to Met1390, and Pro1395 to Glu1432. Disordered regions lie at residues Asp1982 to Ala2001 and Val2028 to Lys2065. The tract at residues Pro2002 to Lys2065 is interaction with tacc3. The segment covering Ser2038 to Thr2048 has biased composition (low complexity). Positions Asp2051–Lys2065 are enriched in basic and acidic residues.

It belongs to the TOG/XMAP215 family. Interacts with tacc3; two molecules of ckap5 interact with 1 molecule of tacc3 probably mediated by coiled coil domains forming a four-helix bundle. Interacts with tacc3 and clathrin forming the TACC3/ch-TOG/clathrin complex located at spindle inter-microtubules bridges. Interacts with ndc80; indicative for an association with the NDC80 comnplex.

It localises to the cytoplasm. The protein resides in the cytoskeleton. Its subcellular location is the spindle pole. The protein localises to the spindle. It is found in the microtubule organizing center. It localises to the centrosome. The protein resides in the chromosome. Its subcellular location is the centromere. The protein localises to the kinetochore. In terms of biological role, binds to the plus end of microtubules and regulates microtubule dynamics and microtubule organization. Acts as a processive microtubule polymerase. Promotes cytoplasmic microtubule nucleation and elongation. Plays a major role in organizing spindle poles. In spindle formation protects kinetochore microtubules from depolymerization by kif2c and has an essential role in centrosomal microtubule assembly independently of kif2c activity. Contributes to centrosome integrity. Acts as a component of the TACC3/ch-TOG/clathrin complex proposed to contribute to stabilization of kinetochore fibers of the mitotic spindle by acting as inter-microtubule bridge. Enhances the strength of NDC80 complex-mediated kinetochore-tip microtubule attachments. In Xenopus laevis (African clawed frog), this protein is Cytoskeleton-associated protein 5-A (ckap5-a).